Reading from the N-terminus, the 279-residue chain is Release factor glutamine methyltransferase (279 aa).

Residues 118–122, aspartate 141, and asparagine 182 each bind S-adenosyl-L-methionine; that span reads GTGSG. 182–185 provides a ligand contact to substrate; it reads NPPY.

This sequence belongs to the protein N5-glutamine methyltransferase family. PrmC subfamily.

It carries out the reaction L-glutaminyl-[peptide chain release factor] + S-adenosyl-L-methionine = N(5)-methyl-L-glutaminyl-[peptide chain release factor] + S-adenosyl-L-homocysteine + H(+). Functionally, methylates the class 1 translation termination release factors RF1/PrfA and RF2/PrfB on the glutamine residue of the universally conserved GGQ motif. The sequence is that of Release factor glutamine methyltransferase from Streptococcus pneumoniae (strain ATCC BAA-255 / R6).